Reading from the N-terminus, the 75-residue chain is Large ribosomal subunit protein bL31 (75 aa).

It belongs to the bacterial ribosomal protein bL31 family. Type A subfamily. Part of the 50S ribosomal subunit.

Binds the 23S rRNA. In Chlorobium phaeovibrioides (strain DSM 265 / 1930) (Prosthecochloris vibrioformis (strain DSM 265)), this protein is Large ribosomal subunit protein bL31.